The sequence spans 306 residues: Ribonuclease Z (306 aa).

Positions 63, 65, 67, 68, 141, 211, and 269 each coordinate Zn(2+). The active-site Proton acceptor is D67.

The protein belongs to the RNase Z family. As to quaternary structure, homodimer. It depends on Zn(2+) as a cofactor.

The catalysed reaction is Endonucleolytic cleavage of RNA, removing extra 3' nucleotides from tRNA precursor, generating 3' termini of tRNAs. A 3'-hydroxy group is left at the tRNA terminus and a 5'-phosphoryl group is left at the trailer molecule.. Zinc phosphodiesterase, which displays some tRNA 3'-processing endonuclease activity. Probably involved in tRNA maturation, by removing a 3'-trailer from precursor tRNA. This chain is Ribonuclease Z, found in Staphylococcus epidermidis (strain ATCC 12228 / FDA PCI 1200).